The sequence spans 244 residues: Carbonyl reductase [NADPH] 2 (244 aa).

11 to 39 contacts NADP(+); sequence LVTGAGKGIGRDTVKALHVSGARVVAVTR. Residue serine 136 participates in substrate binding. The active-site Proton acceptor is tyrosine 149. A Phosphoserine modification is found at serine 176.

It belongs to the short-chain dehydrogenases/reductases (SDR) family. In terms of assembly, homotetramer. Lung (ciliated cells, non-ciliated bronchiolar cells and type-II alveolar pneumocytes). Low expression in all extrapulmonary tissues, including adipose tissue.

Its subcellular location is the mitochondrion matrix. The catalysed reaction is a secondary alcohol + NADP(+) = a ketone + NADPH + H(+). Its activity is regulated as follows. Allosteric enzyme exhibiting negative cooperativity. Activated 2-5 fold by fatty acids. Its function is as follows. May function in the pulmonary metabolism of endogenous carbonyl compounds, such as aliphatic aldehydes and ketones derived from lipid peroxidation, 3-ketosteroids and fatty aldehydes, as well as in xenobiotic metabolism. The sequence is that of Carbonyl reductase [NADPH] 2 (CBR2) from Sus scrofa (Pig).